A 545-amino-acid polypeptide reads, in one-letter code: ATP synthase F(1) complex subunit alpha, mitochondrial (545 aa).

5 residues coordinate ATP: Gln-216, Gly-218, Lys-219, Thr-220, and Ser-221. A Mg(2+)-binding site is contributed by Thr-220. Asp-304 is a binding site for Mg(2+). The ATP site is built by Gln-465 and Gln-467.

The protein belongs to the ATPase alpha/beta chains family. Homotrimer. Component of the ATP synthase complex composed at least of ATP5F1A/subunit alpha, ATP5F1B/subunit beta, ATP5MC1/subunit c (homooctomer), MT-ATP6/subunit a, MT-ATP8/subunit 8, ATP5ME/subunit e, ATP5MF/subunit f, ATP5MG/subunit g, ATP5MK/subunit k, ATP5MJ/subunit j, ATP5F1C/subunit gamma, ATP5F1D/subunit delta, ATP5F1E/subunit epsilon, ATP5PF/subunit F6, ATP5PB/subunit b, ATP5PD/subunit d, ATP5PO/subunit OSCP. ATP synthase complex consists of a soluble F(1) head domain (subunits alpha(3) and beta(3)) - the catalytic core - and a membrane F(0) domain - the membrane proton channel (subunits c, a, 8, e, f, g, k and j). These two domains are linked by a central stalk (subunits gamma, delta, and epsilon) rotating inside the F1 region and a stationary peripheral stalk (subunits F6, b, d, and OSCP).

The protein localises to the mitochondrion inner membrane. Subunit alpha, of the mitochondrial membrane ATP synthase complex (F(1)F(0) ATP synthase or Complex V) that produces ATP from ADP in the presence of a proton gradient across the membrane which is generated by electron transport complexes of the respiratory chain. ATP synthase complex consist of a soluble F(1) head domain - the catalytic core - and a membrane F(1) domain - the membrane proton channel. These two domains are linked by a central stalk rotating inside the F(1) region and a stationary peripheral stalk. During catalysis, ATP synthesis in the catalytic domain of F(1) is coupled via a rotary mechanism of the central stalk subunits to proton translocation. In vivo, can only synthesize ATP although its ATP hydrolase activity can be activated artificially in vitro. With the catalytic subunit beta (ATP5F1B), forms the catalytic core in the F(1) domain. Subunit alpha does not bear the catalytic high-affinity ATP-binding sites. The protein is ATP synthase F(1) complex subunit alpha, mitochondrial of Xenopus laevis (African clawed frog).